The sequence spans 166 residues: NAD(P)H-quinone oxidoreductase subunit I, chloroplastic (166 aa).

2 consecutive 4Fe-4S ferredoxin-type domains span residues 55 to 84 and 95 to 124; these read GRIHFEFDKCIACEVCVRVCPIDLPVVDWK and LNYSIDFGVCIFCGNCVEYCPTNCLSMTEE. [4Fe-4S] cluster-binding residues include C64, C67, C70, C74, C104, C107, C110, and C114.

It belongs to the complex I 23 kDa subunit family. As to quaternary structure, NDH is composed of at least 16 different subunits, 5 of which are encoded in the nucleus. [4Fe-4S] cluster is required as a cofactor.

It is found in the plastid. Its subcellular location is the chloroplast thylakoid membrane. It carries out the reaction a plastoquinone + NADH + (n+1) H(+)(in) = a plastoquinol + NAD(+) + n H(+)(out). It catalyses the reaction a plastoquinone + NADPH + (n+1) H(+)(in) = a plastoquinol + NADP(+) + n H(+)(out). In terms of biological role, NDH shuttles electrons from NAD(P)H:plastoquinone, via FMN and iron-sulfur (Fe-S) centers, to quinones in the photosynthetic chain and possibly in a chloroplast respiratory chain. The immediate electron acceptor for the enzyme in this species is believed to be plastoquinone. Couples the redox reaction to proton translocation, and thus conserves the redox energy in a proton gradient. The sequence is that of NAD(P)H-quinone oxidoreductase subunit I, chloroplastic from Enydra sessilis (Smallray swampwort).